The primary structure comprises 228 residues: 7-cyano-7-deazaguanine synthase (228 aa).

7 to 17 provides a ligand contact to ATP; the sequence is LSGGLDSSTAL. Residues Cys-190, Cys-202, Cys-205, and Cys-208 each contribute to the Zn(2+) site.

This sequence belongs to the QueC family. Zn(2+) serves as cofactor.

It carries out the reaction 7-carboxy-7-deazaguanine + NH4(+) + ATP = 7-cyano-7-deazaguanine + ADP + phosphate + H2O + H(+). The protein operates within purine metabolism; 7-cyano-7-deazaguanine biosynthesis. Functionally, catalyzes the ATP-dependent conversion of 7-carboxy-7-deazaguanine (CDG) to 7-cyano-7-deazaguanine (preQ(0)). The protein is 7-cyano-7-deazaguanine synthase of Acaryochloris marina (strain MBIC 11017).